The sequence spans 90 residues: Serine protease inhibitor kazal-like protein, minor form (90 aa).

The N-terminal stretch at 1–23 is a signal peptide; the sequence is MSSTWIKFLFILTLVLLPYSVFS. The 57-residue stretch at 33–89 folds into the Kazal-like domain; it reads VIKEPNCTMYKSKSECSNIAENPVCADDRNTYYNECYFCIEKVVEKLKYRYHGICIY. Asn-38 is a glycosylation site (N-linked (GlcNAc...) asparagine).

Luminal fluid and mucosal folds of the seminal vesicles (at protein level). Not detected in brain, heart, lung, liver, kidney, stomach, small intestine, muscle, skin, thymus, placenta or bladder.

It is found in the secreted. Its function is as follows. Does not function as an inhibitor of trypsin, chymotrypsin, subtilisin or elastase. Binds sperm and enhances sperm motility. May act as a decapacitation factor, suppresses BSA-stimulated sperm capacitation and blocks sperm-oocyte interactions in vitro. In Mus musculus (Mouse), this protein is Serine protease inhibitor kazal-like protein, minor form (Spinkl).